The sequence spans 61 residues: Small ribosomal subunit protein uS14 (61 aa).

Residues Cys24, Cys27, Cys40, and Cys43 each contribute to the Zn(2+) site.

Belongs to the universal ribosomal protein uS14 family. Zinc-binding uS14 subfamily. In terms of assembly, part of the 30S ribosomal subunit. Contacts proteins S3 and S10. Zn(2+) is required as a cofactor.

Binds 16S rRNA, required for the assembly of 30S particles and may also be responsible for determining the conformation of the 16S rRNA at the A site. The polypeptide is Small ribosomal subunit protein uS14 (Maridesulfovibrio salexigens (strain ATCC 14822 / DSM 2638 / NCIMB 8403 / VKM B-1763) (Desulfovibrio salexigens)).